The primary structure comprises 142 residues: Large ribosomal subunit protein uL11 (142 aa).

It belongs to the universal ribosomal protein uL11 family. As to quaternary structure, part of the ribosomal stalk of the 50S ribosomal subunit. Interacts with L10 and the large rRNA to form the base of the stalk. L10 forms an elongated spine to which L12 dimers bind in a sequential fashion forming a multimeric L10(L12)X complex. Post-translationally, one or more lysine residues are methylated.

In terms of biological role, forms part of the ribosomal stalk which helps the ribosome interact with GTP-bound translation factors. This Bartonella tribocorum (strain CIP 105476 / IBS 506) protein is Large ribosomal subunit protein uL11.